The following is a 266-amino-acid chain: Small ribosomal subunit protein eS1 (266 aa).

The interval 233 to 266 (GEGGGSSAAKPSGDDTGAKVDRADGYEPPIQETV) is disordered. Basic and acidic residues predominate over residues 244 to 257 (SGDDTGAKVDRADG).

This sequence belongs to the eukaryotic ribosomal protein eS1 family. In terms of assembly, component of the small ribosomal subunit. Mature ribosomes consist of a small (40S) and a large (60S) subunit. The 40S subunit contains about 33 different proteins and 1 molecule of RNA (18S). The 60S subunit contains about 49 different proteins and 3 molecules of RNA (28S, 5.8S and 5S). Part of the small subunit (SSU) processome, composed of more than 70 proteins and the RNA chaperone small nucleolar RNA (snoRNA) U3.

The protein localises to the cytoplasm. It localises to the nucleus. It is found in the nucleolus. In terms of biological role, component of the small ribosomal subunit. The ribosome is a large ribonucleoprotein complex responsible for the synthesis of proteins in the cell. Part of the small subunit (SSU) processome, first precursor of the small eukaryotic ribosomal subunit. During the assembly of the SSU processome in the nucleolus, many ribosome biogenesis factors, an RNA chaperone and ribosomal proteins associate with the nascent pre-rRNA and work in concert to generate RNA folding, modifications, rearrangements and cleavage as well as targeted degradation of pre-ribosomal RNA by the RNA exosome. May play a role during erythropoiesis. This Salmo salar (Atlantic salmon) protein is Small ribosomal subunit protein eS1 (rps3a).